A 409-amino-acid polypeptide reads, in one-letter code: Nucleoprotein (409 aa).

Disordered stretches follow at residues M1–N32, L44–G69, A121–D194, and V238–N259. The interval S29–L160 is RNA-binding. The region spanning G31–D156 is the CoV N NTD domain. Over residues R162 to P179 the composition is skewed to low complexity. Basic and acidic residues-rich tracts occupy residues P180–S192 and K247–N259. Phosphoserine; by host occurs at positions 190 and 192. In terms of domain architecture, CoV N CTD spans T215–P331. Residues R226–D333 form a dimerization region. A disulfide bridge links C320 with C323. The interval G326–L409 is disordered. Over residues R341–R356 the composition is skewed to low complexity. Over residues Q358–K367 the composition is skewed to basic residues. Basic and acidic residues predominate over residues K368 to N384. T378 carries the post-translational modification Phosphothreonine; by host. S379 is subject to Phosphoserine; by host.

Belongs to the gammacoronavirus nucleocapsid protein family. In terms of assembly, homooligomer. Both monomeric and oligomeric forms interact with RNA. Interacts with protein M. Interacts with NSP3; this interaction serves to tether the genome to the newly translated replicase-transcriptase complex at a very early stage of infection. In terms of processing, ADP-ribosylated. The ADP-ribosylation is retained in the virion during infection. Post-translationally, phosphorylated on serine and threonine residues.

The protein resides in the virion. It is found in the host endoplasmic reticulum-Golgi intermediate compartment. The protein localises to the host Golgi apparatus. Functionally, packages the positive strand viral genome RNA into a helical ribonucleocapsid (RNP) and plays a fundamental role during virion assembly through its interactions with the viral genome and membrane protein M. Plays an important role in enhancing the efficiency of subgenomic viral RNA transcription as well as viral replication. The protein is Nucleoprotein of Gallus gallus (Chicken).